The sequence spans 114 residues: Large ribosomal subunit protein uL22 (114 aa).

This sequence belongs to the universal ribosomal protein uL22 family. As to quaternary structure, part of the 50S ribosomal subunit.

Its function is as follows. This protein binds specifically to 23S rRNA; its binding is stimulated by other ribosomal proteins, e.g. L4, L17, and L20. It is important during the early stages of 50S assembly. It makes multiple contacts with different domains of the 23S rRNA in the assembled 50S subunit and ribosome. Functionally, the globular domain of the protein is located near the polypeptide exit tunnel on the outside of the subunit, while an extended beta-hairpin is found that lines the wall of the exit tunnel in the center of the 70S ribosome. This Streptococcus agalactiae serotype Ia (strain ATCC 27591 / A909 / CDC SS700) protein is Large ribosomal subunit protein uL22.